Consider the following 257-residue polypeptide: MGTVRPPRPSLLLVSTRESCLFLLFCLHLGAACPQPCRCPDHAGAVAVFCSLRGLQEVPEDIPANTVLLKLDANKISHLPDGAFQHLHRLRELDLSHNAIEAIGSATFAGLAGGLRLLDLSYNRIQRIPKDALGKLSAKIRLSHNPLHCECALQEALWELKLDPDSVDEIACHTSVQEEFVGKPLVQALDAGASLCSVPHRTTDVAMLVTMFGWFAMVIAYVVYYVRHNQEDARRHLEYLKSLPSAPASKDPIGPGP.

The N-terminal stretch at Met1–Ala32 is a signal peptide. One can recognise an LRRNT domain in the interval Cys33–Ala64. LRR repeat units lie at residues Asn65–His86, Arg89–Gly110, Gly114–Lys135, and Leu136–Leu157. The helical transmembrane segment at Val205–Tyr225 threads the bilayer.

It belongs to the LRRC3 family. Widely expressed; detected in testis, lung, small intestine, breast, brain, heart, bone marrow, placenta, colon, fetal brain, liver, fetal liver, thymus, salivary gland, spinal cord, spleen, trachea and adrenal gland.

The protein localises to the membrane. The protein is Leucine-rich repeat-containing protein 3 (LRRC3) of Homo sapiens (Human).